Reading from the N-terminus, the 459-residue chain is Ribulose bisphosphate carboxylase large chain (459 aa).

Position 4 is an N6,N6,N6-trimethyllysine (K4). N113 and T163 together coordinate substrate. K165 serves as the catalytic Proton acceptor. K167 serves as a coordination point for substrate. Residues K191, D193, and E194 each contribute to the Mg(2+) site. K191 carries the post-translational modification N6-carboxylysine. H284 acts as the Proton acceptor in catalysis. 3 residues coordinate substrate: R285, H317, and S369.

This sequence belongs to the RuBisCO large chain family. Type I subfamily. Heterohexadecamer of 8 large chains and 8 small chains; disulfide-linked. The disulfide link is formed within the large subunit homodimers. The cofactor is Mg(2+). Post-translationally, the disulfide bond which can form in the large chain dimeric partners within the hexadecamer appears to be associated with oxidative stress and protein turnover.

It is found in the plastid. Its subcellular location is the chloroplast. It catalyses the reaction 2 (2R)-3-phosphoglycerate + 2 H(+) = D-ribulose 1,5-bisphosphate + CO2 + H2O. The enzyme catalyses D-ribulose 1,5-bisphosphate + O2 = 2-phosphoglycolate + (2R)-3-phosphoglycerate + 2 H(+). Its function is as follows. RuBisCO catalyzes two reactions: the carboxylation of D-ribulose 1,5-bisphosphate, the primary event in carbon dioxide fixation, as well as the oxidative fragmentation of the pentose substrate in the photorespiration process. Both reactions occur simultaneously and in competition at the same active site. The chain is Ribulose bisphosphate carboxylase large chain from Garrya elliptica (Wavyleaf silktassel).